Here is a 125-residue protein sequence, read N- to C-terminus: Ribonuclease VapC19 (125 aa).

The PINc domain maps to 3–122; that stretch reads LIDTTIAVDH…RHFPMFPDLQ (120 aa). The Mg(2+) site is built by D5 and D93.

Belongs to the PINc/VapC protein family. It depends on Mg(2+) as a cofactor.

Its function is as follows. Toxic component of a type II toxin-antitoxin (TA) system. An RNase. Its toxic effect is neutralized by coexpression with cognate antitoxin VapB19. This Mycobacterium tuberculosis (strain CDC 1551 / Oshkosh) protein is Ribonuclease VapC19.